A 299-amino-acid polypeptide reads, in one-letter code: MFRVTGTLSAASSPAVAAASFSAALRLSITPTLAIASPPHLRWFSKFSRQFLGGRISSLRPRIPSPCPIRLSGFPALKMRASFSSGSSGSSASREILVQHLLVKNNDVELFAELQKKFLDGEEMSDLAAEYSICPSKKDGGILGWVKLGQMVPEFEEAAFKAELNQVVRCRTQFGLHLLQVLSEREPVKDIQVEELHSKMQDPVFMDEAQLIDVREPNEIEIASLPGFKVFPLRQFGTWAPDITSKLNPEKDTFVLCKVGGRSMQVANWLQSQGFKSVYNITGGIQAYSLKVDPSIPTY.

Residues 1–81 (MFRVTGTLSA…SGFPALKMRA (81 aa)) constitute a chloroplast transit peptide. N-acetylserine is present on S82. Residues 93–183 (SREILVQHLL…FGLHLLQVLS (91 aa)) form the PpiC domain. In terms of domain architecture, Rhodanese spans 205 to 297 (FMDEAQLIDV…YSLKVDPSIP (93 aa)). Catalysis depends on C257, which acts as the Cysteine persulfide intermediate.

It localises to the plastid. The protein localises to the chloroplast. In Arabidopsis thaliana (Mouse-ear cress), this protein is Rhodanese-like/PpiC domain-containing protein 12, chloroplastic.